A 1116-amino-acid polypeptide reads, in one-letter code: Surface layer protein (1116 aa).

Positions 1 to 53 are cleaved as a signal peptide; the sequence is MQDSGFKKKDRSTNIPQEQFVYTRGGEHKVMKKVVNSVLASALAITVAPMAFA. 3 consecutive SLH domains span residues 54–117, 118–181, and 182–231; these read AEDT…KLAQ, FNTT…RGVW, and PNSM…YGTD.

The protein resides in the secreted. It localises to the cell wall. The protein localises to the S-layer. In Brevibacillus choshinensis, this protein is Surface layer protein.